A 314-amino-acid polypeptide reads, in one-letter code: Probable manganese-dependent inorganic pyrophosphatase (314 aa).

Residues H7, D11, D13, D72, H94, and D146 each contribute to the Mn(2+) site.

It belongs to the PPase class C family. Mn(2+) serves as cofactor.

It localises to the cytoplasm. The catalysed reaction is diphosphate + H2O = 2 phosphate + H(+). This chain is Probable manganese-dependent inorganic pyrophosphatase (ppaC), found in Deinococcus radiodurans (strain ATCC 13939 / DSM 20539 / JCM 16871 / CCUG 27074 / LMG 4051 / NBRC 15346 / NCIMB 9279 / VKM B-1422 / R1).